The following is a 215-amino-acid chain: Pyrrolidone-carboxylate peptidase (215 aa).

Active-site residues include glutamate 78, cysteine 141, and histidine 165.

This sequence belongs to the peptidase C15 family. As to quaternary structure, homotetramer.

The protein resides in the cytoplasm. The catalysed reaction is Release of an N-terminal pyroglutamyl group from a polypeptide, the second amino acid generally not being Pro.. In terms of biological role, removes 5-oxoproline from various penultimate amino acid residues except L-proline. In Streptococcus pyogenes serotype M3 (strain SSI-1), this protein is Pyrrolidone-carboxylate peptidase.